Reading from the N-terminus, the 630-residue chain is Ribonucleoside-diphosphate reductase large subunit (630 aa).

Substrate is bound by residues serine 67, 82-83 (AC), glycine 111, 317-321 (NLCSE), and 459-463 (PNATS). Cysteine 83 and cysteine 334 are disulfide-bonded. Asparagine 317 functions as the Proton acceptor in the catalytic mechanism. Residue cysteine 319 is the Cysteine radical intermediate of the active site. Glutamate 321 (proton acceptor) is an active-site residue.

Belongs to the ribonucleoside diphosphate reductase large chain family. In terms of assembly, heterotetramer composed of a homodimer of the large subunit (R1) and a homodimer of the small subunit (R2). Larger multisubunit protein complex are also active, composed of (R1)n(R2)n.

The catalysed reaction is a 2'-deoxyribonucleoside 5'-diphosphate + [thioredoxin]-disulfide + H2O = a ribonucleoside 5'-diphosphate + [thioredoxin]-dithiol. Under complex allosteric control mediated by deoxynucleoside triphosphates and ATP binding. The type of nucleotide bound at the specificity site determines substrate preference. It seems probable that ATP makes the enzyme reduce CDP and UDP, dGTP favors ADP reduction and dTTP favors GDP reduction. In terms of biological role, ribonucleoside-diphosphate reductase holoenzyme provides the precursors necessary for viral DNA synthesis. Allows virus growth in non-dividing cells. Catalyzes the biosynthesis of deoxyribonucleotides from the corresponding ribonucleotides. The chain is Ribonucleoside-diphosphate reductase large subunit from Aedes vexans (Inland floodwater mosquito).